The chain runs to 189 residues: Adenylate kinase homolog MTH_1663 (189 aa).

Position 12–20 (12–20) interacts with ATP; sequence GVPGTGKTT.

This sequence belongs to the archaeal adenylate kinase family.

This chain is Adenylate kinase homolog MTH_1663, found in Methanothermobacter thermautotrophicus (strain ATCC 29096 / DSM 1053 / JCM 10044 / NBRC 100330 / Delta H) (Methanobacterium thermoautotrophicum).